The following is a 495-amino-acid chain: Glycerol kinase (495 aa).

Residue threonine 13 participates in ADP binding. ATP contacts are provided by threonine 13, threonine 14, and serine 15. Threonine 13 contributes to the sn-glycerol 3-phosphate binding site. Arginine 17 lines the ADP pocket. Sn-glycerol 3-phosphate is bound by residues arginine 83, glutamate 84, tyrosine 135, and aspartate 244. Positions 83, 84, 135, 244, and 245 each coordinate glycerol. ADP is bound by residues threonine 266 and glycine 309. ATP contacts are provided by threonine 266, glycine 309, glutamine 313, and glycine 410. Glycine 410 and asparagine 414 together coordinate ADP.

It belongs to the FGGY kinase family.

It catalyses the reaction glycerol + ATP = sn-glycerol 3-phosphate + ADP + H(+). Its pathway is polyol metabolism; glycerol degradation via glycerol kinase pathway; sn-glycerol 3-phosphate from glycerol: step 1/1. Inhibited by fructose 1,6-bisphosphate (FBP). Its function is as follows. Key enzyme in the regulation of glycerol uptake and metabolism. Catalyzes the phosphorylation of glycerol to yield sn-glycerol 3-phosphate. The chain is Glycerol kinase from Shewanella sediminis (strain HAW-EB3).